Reading from the N-terminus, the 295-residue chain is MATLKDIRTRIQSIASTQQVTKAMKMVSAAKLRRAQDSAIQARPYAAKLKEMLGSLSTRVDTTLNPLLSDRDEVKNVLVVVITSDRGLCGAFNANIIKIAQKVVTEEHGDLYRDGKVEMLCAGSKGNDYFRKRGFSISKAYPGLFQNLHFSVAREIAEYASERYLKGEVDKVVVVYNEFKSVLAPVLKSEVLLPITPEKVEGEKTGSSIDYIYEPSPSAIIDVLVPKHLNTQIWRMMLESNAAEHASRMTAMDSATENAKELMRVLKISYNRARQAAITTELSEIVAGAEALQGE.

Belongs to the ATPase gamma chain family. As to quaternary structure, F-type ATPases have 2 components, CF(1) - the catalytic core - and CF(0) - the membrane proton channel. CF(1) has five subunits: alpha(3), beta(3), gamma(1), delta(1), epsilon(1). CF(0) has three main subunits: a, b and c.

It is found in the cell inner membrane. Functionally, produces ATP from ADP in the presence of a proton gradient across the membrane. The gamma chain is believed to be important in regulating ATPase activity and the flow of protons through the CF(0) complex. This chain is ATP synthase gamma chain, found in Chlorobium phaeobacteroides (strain BS1).